The chain runs to 431 residues: Tyrosine--tRNA ligase (431 aa).

Tyr34 provides a ligand contact to L-tyrosine. Positions 39–48 (PTADSLHIGH) match the 'HIGH' region motif. 2 residues coordinate L-tyrosine: Tyr171 and Gln175. Positions 231 to 235 (KFGKT) match the 'KMSKS' region motif. Lys234 contributes to the ATP binding site. Positions 353 to 422 (INAVEALVKT…GKYTILRRGK (70 aa)) constitute an S4 RNA-binding domain.

This sequence belongs to the class-I aminoacyl-tRNA synthetase family. TyrS type 1 subfamily. As to quaternary structure, homodimer.

The protein localises to the cytoplasm. The enzyme catalyses tRNA(Tyr) + L-tyrosine + ATP = L-tyrosyl-tRNA(Tyr) + AMP + diphosphate + H(+). In terms of biological role, catalyzes the attachment of tyrosine to tRNA(Tyr) in a two-step reaction: tyrosine is first activated by ATP to form Tyr-AMP and then transferred to the acceptor end of tRNA(Tyr). The polypeptide is Tyrosine--tRNA ligase (Neisseria gonorrhoeae (strain ATCC 700825 / FA 1090)).